The chain runs to 120 residues: Large ribosomal subunit protein uL22 (120 aa).

This sequence belongs to the universal ribosomal protein uL22 family. As to quaternary structure, part of the 50S ribosomal subunit.

Functionally, this protein binds specifically to 23S rRNA; its binding is stimulated by other ribosomal proteins, e.g. L4, L17, and L20. It is important during the early stages of 50S assembly. It makes multiple contacts with different domains of the 23S rRNA in the assembled 50S subunit and ribosome. In terms of biological role, the globular domain of the protein is located near the polypeptide exit tunnel on the outside of the subunit, while an extended beta-hairpin is found that lines the wall of the exit tunnel in the center of the 70S ribosome. The sequence is that of Large ribosomal subunit protein uL22 from Corynebacterium diphtheriae (strain ATCC 700971 / NCTC 13129 / Biotype gravis).